Reading from the N-terminus, the 499-residue chain is Glycerol kinase (499 aa).

Residue threonine 17 participates in ADP binding. The ATP site is built by threonine 17, threonine 18, and serine 19. Threonine 17 is a binding site for sn-glycerol 3-phosphate. Arginine 21 lines the ADP pocket. Sn-glycerol 3-phosphate-binding residues include arginine 87, glutamate 88, tyrosine 139, and aspartate 243. Arginine 87, glutamate 88, tyrosine 139, aspartate 243, and glutamine 244 together coordinate glycerol. ADP-binding residues include threonine 265 and glycine 308. Residues threonine 265, glycine 308, glutamine 312, and glycine 409 each coordinate ATP. Residues glycine 409 and asparagine 413 each coordinate ADP.

The protein belongs to the FGGY kinase family.

The catalysed reaction is glycerol + ATP = sn-glycerol 3-phosphate + ADP + H(+). It functions in the pathway polyol metabolism; glycerol degradation via glycerol kinase pathway; sn-glycerol 3-phosphate from glycerol: step 1/1. Inhibited by fructose 1,6-bisphosphate (FBP). In terms of biological role, key enzyme in the regulation of glycerol uptake and metabolism. Catalyzes the phosphorylation of glycerol to yield sn-glycerol 3-phosphate. This chain is Glycerol kinase, found in Pseudomonas putida (strain GB-1).